Reading from the N-terminus, the 209-residue chain is MICOS complex subunit mic19 (209 aa).

Coiled coils occupy residues 48 to 86 and 127 to 156; these read LELE…DTGS and EVAA…GRKK.

This sequence belongs to the MICOS complex subunit Mic19 family. In terms of assembly, component of the mitochondrial contact site and cristae organizing system (MICOS) complex.

The protein resides in the mitochondrion inner membrane. Component of the MICOS complex, a large protein complex of the mitochondrial inner membrane that plays crucial roles in the maintenance of crista junctions, inner membrane architecture, and formation of contact sites to the outer membrane. Involved in osmoadaptation. This Emericella nidulans (strain FGSC A4 / ATCC 38163 / CBS 112.46 / NRRL 194 / M139) (Aspergillus nidulans) protein is MICOS complex subunit mic19.